Consider the following 73-residue polypeptide: Frenatin 3.1 (73 aa).

Residues 1–22 (MHFLKKSIFLVLFLGLVSLSIC) form the signal peptide. The propeptide occupies 23-46 (EKEKREDQNEEEVDENEEASEEKR). A disordered region spans residues 25–45 (EKREDQNEEEVDENEEASEEK). Positions 30–42 (QNEEEVDENEEAS) are enriched in acidic residues.

Expressed by the skin glands.

The protein localises to the secreted. Antimicrobial peptide with activity against both Gram-positive and Gram-negative bacteria. The chain is Frenatin 3.1 from Nyctimystes infrafrenatus (White-lipped tree frog).